The sequence spans 262 residues: Octopine permease ATP-binding protein P (262 aa).

In terms of domain architecture, ABC transporter spans 9-254; the sequence is VQLKDIRKNF…PRTDRFRQFL (246 aa). 41 to 48 contributes to the ATP binding site; sequence GSSGSGKS.

It belongs to the ABC transporter superfamily.

Its subcellular location is the cell inner membrane. Component of the octopine active transport system probably consisting of four subunits: Q, M, P and T. In Rhizobium radiobacter (Agrobacterium tumefaciens), this protein is Octopine permease ATP-binding protein P (occP).